Consider the following 439-residue polypeptide: GTPase Der (439 aa).

EngA-type G domains follow at residues 4–168 and 177–352; these read PIVA…KDDE and INIA…DNYN. GTP contacts are provided by residues 10 to 17, 57 to 61, 120 to 123, 183 to 190, 230 to 234, and 295 to 298; these read GRPNVGKS, DTGGI, NKID, GKPNVGKS, DTAGL, and NKWD. Residues 353–437 enclose the KH-like domain; sequence KRVKTGVLND…GIKSEFRERK (85 aa).

The protein belongs to the TRAFAC class TrmE-Era-EngA-EngB-Septin-like GTPase superfamily. EngA (Der) GTPase family. In terms of assembly, associates with the 50S ribosomal subunit.

In terms of biological role, GTPase that plays an essential role in the late steps of ribosome biogenesis. The polypeptide is GTPase Der (Clostridium botulinum (strain ATCC 19397 / Type A)).